The following is a 227-amino-acid chain: Small ribosomal subunit protein uS3 (227 aa).

In terms of domain architecture, KH type-2 spans 39–107 (VRQLLQKRLK…PVHITIEEVR (69 aa)).

Belongs to the universal ribosomal protein uS3 family. As to quaternary structure, part of the 30S ribosomal subunit. Forms a tight complex with proteins S10 and S14.

Its function is as follows. Binds the lower part of the 30S subunit head. Binds mRNA in the 70S ribosome, positioning it for translation. This chain is Small ribosomal subunit protein uS3, found in Coxiella burnetii (strain CbuK_Q154) (Coxiella burnetii (strain Q154)).